Consider the following 276-residue polypeptide: Secreted LysM effector LysM10 (276 aa).

The N-terminal stretch at 1–22 (MLLSLVKFGILSVFLLAQEAVA) is a signal peptide. Residues N27, N104, and N140 are each glycosylated (N-linked (GlcNAc...) asparagine). The LysM domain occupies 219–264 (KTYIAKEDDTCKSISEAQSISTDRLVEVNHLDYSCSSLTSGTALCI). Residue N267 is glycosylated (N-linked (GlcNAc...) asparagine).

It belongs to the secreted LysM effector family.

The protein localises to the secreted. Functionally, secreted LysM effector that might have a role in sequestration of chitin oligosaccharides (breakdown products of fungal cell walls that are released during invasion and act as triggers of host immunity) to dampen host defense. The sequence is that of Secreted LysM effector LysM10 from Penicillium expansum (Blue mold rot fungus).